Consider the following 348-residue polypeptide: Sulfate/thiosulfate import ATP-binding protein CysA (348 aa).

Residues 3 to 237 (IEVRNIVKEF…PASAFVHGFI (235 aa)) enclose the ABC transporter domain. Residue 35 to 42 (GPSGSGKT) coordinates ATP.

It belongs to the ABC transporter superfamily. Sulfate/tungstate importer (TC 3.A.1.6) family. As to quaternary structure, the complex is composed of two ATP-binding proteins (CysA), two transmembrane proteins (CysT and CysW) and a solute-binding protein (CysP).

Its subcellular location is the cell inner membrane. It carries out the reaction sulfate(out) + ATP + H2O = sulfate(in) + ADP + phosphate + H(+). The enzyme catalyses thiosulfate(out) + ATP + H2O = thiosulfate(in) + ADP + phosphate + H(+). Functionally, part of the ABC transporter complex CysAWTP involved in sulfate/thiosulfate import. Responsible for energy coupling to the transport system. The polypeptide is Sulfate/thiosulfate import ATP-binding protein CysA (Rhodopseudomonas palustris (strain ATCC BAA-98 / CGA009)).